A 341-amino-acid chain; its full sequence is MTDFKTIIARLAEGRALDAAEARAAFEIVMSGEATQAQIGAFLMGLRVRGETVAEITAGATVMRERALRVTAPANAIDIVGTGGDGVGTWNISTATALVVAAAGVPVAKHGNRKASSLSGTADALQALGVNLDIDPATIAASIEKAGIGFMFAQAHHAAMKHVAPVRADLGIKTIFNMLGPLSNPALVKRQLLGVFAAEWVKPFAEALRNLGSDSAWVVHGSDGMDELTTTGPSAVAELKGGSIRVFEVTPEDAGLPRASIEDLKGGDPEQNAAAIRRLLDGEAGAYRDIVLLNTAAALIVSGKAATLKEGAGLAAKAIDSGAAKQTLAKLVAATNGKNNV.

Residues Gly81, Gly84–Asp85, Thr89, Asn91–Thr94, Lys109–Ser117, and Thr121 each bind 5-phospho-alpha-D-ribose 1-diphosphate. Gly81 provides a ligand contact to anthranilate. Ser93 serves as a coordination point for Mg(2+). Asn112 is a binding site for anthranilate. Residue Arg167 participates in anthranilate binding. Residues Asp226 and Glu227 each contribute to the Mg(2+) site.

This sequence belongs to the anthranilate phosphoribosyltransferase family. In terms of assembly, homodimer. The cofactor is Mg(2+).

The enzyme catalyses N-(5-phospho-beta-D-ribosyl)anthranilate + diphosphate = 5-phospho-alpha-D-ribose 1-diphosphate + anthranilate. The protein operates within amino-acid biosynthesis; L-tryptophan biosynthesis; L-tryptophan from chorismate: step 2/5. Functionally, catalyzes the transfer of the phosphoribosyl group of 5-phosphorylribose-1-pyrophosphate (PRPP) to anthranilate to yield N-(5'-phosphoribosyl)-anthranilate (PRA). The protein is Anthranilate phosphoribosyltransferase of Parvibaculum lavamentivorans (strain DS-1 / DSM 13023 / NCIMB 13966).